The sequence spans 141 residues: Large ribosomal subunit protein bL17 (141 aa).

This sequence belongs to the bacterial ribosomal protein bL17 family. Part of the 50S ribosomal subunit. Contacts protein L32.

This Bartonella bacilliformis (strain ATCC 35685 / KC583 / Herrer 020/F12,63) protein is Large ribosomal subunit protein bL17.